The sequence spans 309 residues: Homoserine kinase (309 aa).

ATP is bound at residue 91–101 (PIGSGLGSSAC).

This sequence belongs to the GHMP kinase family. Homoserine kinase subfamily.

Its subcellular location is the cytoplasm. The catalysed reaction is L-homoserine + ATP = O-phospho-L-homoserine + ADP + H(+). The protein operates within amino-acid biosynthesis; L-threonine biosynthesis; L-threonine from L-aspartate: step 4/5. Catalyzes the ATP-dependent phosphorylation of L-homoserine to L-homoserine phosphate. The chain is Homoserine kinase from Cronobacter sakazakii (strain ATCC BAA-894) (Enterobacter sakazakii).